Consider the following 142-residue polypeptide: Large ribosomal subunit protein uL13 (142 aa).

This sequence belongs to the universal ribosomal protein uL13 family. As to quaternary structure, part of the 50S ribosomal subunit.

Functionally, this protein is one of the early assembly proteins of the 50S ribosomal subunit, although it is not seen to bind rRNA by itself. It is important during the early stages of 50S assembly. This Psychromonas ingrahamii (strain DSM 17664 / CCUG 51855 / 37) protein is Large ribosomal subunit protein uL13.